Reading from the N-terminus, the 2042-residue chain is Protein mini spindles (2042 aa).

TOG stretches follow at residues 1–229 (MAED…VEPS) and 267–505 (MDLL…KVAG). The segment at 1-505 (MAEDTEYKKL…KAEIKIKVAG (505 aa)) is binds tubulin. 2 promotes microtubule polymerization regions span residues 1–516 (MAED…ASAP) and 581–1080 (TPEE…EKAR). 7 HEAT repeats span residues 120-157 (EKQE…EFGH), 160-197 (IGVK…WIGA), 270-311 (LDPV…DHPK), 315-353 (GEYG…GLAK), 357-394 (NYAS…STSL), 396-433 (AQQE…TALN), and 440-478 (LTTS…VTPL). An association with microtubule lattice region spans residues 498-821 (EIKIKVAGPK…PKPVRGVQRS (324 aa)). The segment at 506 to 572 (PKKETRPASA…PTAALKAGGK (67 aa)) is disordered. Over residues 513–531 (ASAPTAKAAAPAKTVAGSV) the composition is skewed to low complexity. A TOG 3 region spans residues 581–814 (TPEELQEKSE…KNVGEKPPKP (234 aa)). HEAT repeat units follow at residues 587 to 624 (EKSE…SGFD), 625 to 662 (AKQA…IIRS), 672 to 710 (TTVD…LEYV), and 745 to 782 (LQPK…YMGK). The interval 804–849 (DKNVGEKPPKPVRGVQRSSGGTAGNSPDNEDDDGGAAGEEEPINMA) is disordered. The span at 819 to 830 (QRSSGGTAGNSP) shows a compositional bias: polar residues. Residues 831 to 845 (DNEDDDGGAAGEEEP) are compositionally biased toward acidic residues. TOG regions lie at residues 849 to 1087 (ADLL…PVKP) and 1179 to 1415 (TELL…KPTP). HEAT repeat units lie at residues 856 to 893 (DIAP…EARL), 896 to 933 (PSIG…AMGA), 937 to 974 (NHVR…KGGY), and 1017 to 1054 (EDIH…HLGF). A disordered region spans residues 1083-1140 (LPVKPLPKGKHQAPIPEEPKLKTVRGGGAGGAPGIQKSATARVAGGQDKQVPARKKDE). The interval 1099 to 1428 (EEPKLKTVRG…VDVPAPQRHD (330 aa)) is association with microtubule lattice. HEAT repeat units lie at residues 1205–1242 (RYHL…RFYD), 1272–1309 (NEGS…VFPF), 1311–1344 (KVFG…SYGM), and 1346–1383 (ICPQ…LSGE). 2 disordered regions span residues 1407-1455 (AKKT…TFDQ) and 1940-1959 (NAGS…NGPD). Positions 1940–1957 (NAGSTQDNRTDVNYQNNG) are enriched in polar residues.

The protein belongs to the TOG/XMAP215 family. Interacts with tacc, dgt6. Interacts with mv. Interacts with Patronin.

It is found in the cytoplasm. It localises to the cytoskeleton. Its subcellular location is the microtubule organizing center. The protein localises to the centrosome. The protein resides in the spindle. It is found in the perinuclear region. Its function is as follows. Binds to the plus end of microtubules and regulates microtubule dynamics and microtubule organization. Function in neurons is essential for adult survival, and is important for climbing behavior and activity. Promotes cytoplasmic microtubule nucleation and elongation. May act as a microtubule antipause factor that rapidly catalyzes the transition from pause to either growth or shrinkage. Involved in mitotic spindle elongation. Involved in the establishment of cell polarity and mitotic spindle orientation in neuroblasts. Required for maintaining the bipolarity of acentrosomal meiotic spindles; the function is dependent on tacc and involves ncd. Involved in oocyte microtubule cytoskeleton organization and bicoid mRNA localization. Seems to be involved in elongation of kinetochore-derived microtubule fibers. In fat body cells, essential component of perinuclear non-centrosomal microtubule-organizing centers (ncMTOCs) which function to accommodate the organization of microtubule (MT) networks to control nuclear positioning and dynein motor-based retrograde endosomal trafficking. Within the ncMTOCs, Msp300 and shot anchors the ncMTOC at the nuclear surface and recruits the MT minus-end regulators Patronin and Nin for assembly, anchoring and/or stabilization of circumferential and radial MTs at the ncMTOCs. Patronin, and perhaps Nin, then recruits msps to the ncMTOC where it is required for the gamma-tubulin-independent elongation and assembly of radial MTs. This Drosophila melanogaster (Fruit fly) protein is Protein mini spindles (msps).